A 433-amino-acid chain; its full sequence is DNA polymerase processivity factor (433 aa).

Residues 274-433 are disordered; the sequence is RGDPFDKNYV…VPNTKKQKCG (160 aa). Residues 298–307 show a composition bias toward low complexity; it reads SLSSLANAGG. Gly residues-rich tracts occupy residues 325–336 and 344–359; these read GLGGLGGGGGGG and GGGG…GGGG. Residues 360-376 are compositionally biased toward basic and acidic residues; the sequence is GDHDHGLSSKEKYEQHK. Gly residues predominate over residues 385-398; that stretch reads GGSGGGGGGGGGGL.

Belongs to the herpesviridae polymerase accessory protein family. In terms of assembly, forms homodimers. Interacts with host SMARCB1. Interacts with host NCL/nucleolin; this interaction is important for the organization of proteins within viral replication compartments. Interacts with UL112/UL113; this interaction is necessary for efficient viral DNA replication. Interacts with UL84. Interacts with the uracil DNA glycosylase UL114. Interacts with the DNA polymerase catalytic subunit UL54. Interacts with host IRF3. Interacts with host RELA. Phosphorylated by UL97 on serine residues, phosphorylation seems important for UL44 nuclear entry but does not directly affect its role in replication. Post-translationally, sumoylated. Sumoylation on Lys-410 increases viral DNA replication.

It is found in the virion. It localises to the host nucleus. In terms of biological role, accessory subunit of the DNA polymerase that plays an essential role in viral DNA replication and acts by increasing the processivity of polymerization. Forms dimers that binds to double-stranded DNA and UL54 specifically to stimulates long chain DNA synthesis efficiently. Plays an important role in maintaining the structure of viral replication compartments by interacting with host nucleolin/NUC. In addition, suppresses innate immune responses through effects on host IRF3 and NF-kappa-B. Mechanistically, interfere with the binding of IRF3 and the p65 NF-kappa-B subunit to the promoters of antiviral genes, thereby inhibiting the expression of these genes. This is DNA polymerase processivity factor (UL44) from Human cytomegalovirus (strain Merlin) (HHV-5).